The chain runs to 249 residues: MDFLAQVKKAVELRLATEPSPPARSLPLVDFSKALGEFGIIAEYKRASPRGVVRLDMPPWAYFAMLQPYAAAFSVLTEPYWFLGDYRFITMAKPFKPVLMKDFVIDNRQIDMAYGYGADAVLIIYRLVGREKAMELAEYAQRLGLTPVVEVDNLQDAKEAATWGGKVMLGINARDLATLEVSLQKAFEIAKALRGDVDFIIESGISKPEEVEKACMLYARGVLVGTALMKNPALIKELRHAAESCVSRR.

Belongs to the TrpC family.

The enzyme catalyses 1-(2-carboxyphenylamino)-1-deoxy-D-ribulose 5-phosphate + H(+) = (1S,2R)-1-C-(indol-3-yl)glycerol 3-phosphate + CO2 + H2O. Its pathway is amino-acid biosynthesis; L-tryptophan biosynthesis; L-tryptophan from chorismate: step 4/5. The polypeptide is Indole-3-glycerol phosphate synthase (Pyrobaculum arsenaticum (strain DSM 13514 / JCM 11321 / PZ6)).